The primary structure comprises 173 residues: MVQQQQQSQQRMMELHERNDREKLARKTEKEREEERRKQEDDKILQLEKKLEEFQENARFIGDLASNFQTKYQDALNGRIYTLVRGLQDLDRMKGTFSDKKVPLDLLPYLDDGKNPCLYSKHCMEKTLEKNKAVNGKIEIYKKFRAHLMKEFSEEMPDLVMYYRSIREDLDLS.

Low complexity predominate over residues 1–10 (MVQQQQQSQQ). A disordered region spans residues 1-42 (MVQQQQQSQQRMMELHERNDREKLARKTEKEREEERRKQEDD). Residues 13 to 42 (MELHERNDREKLARKTEKEREEERRKQEDD) are compositionally biased toward basic and acidic residues.

This sequence belongs to the Mediator complex subunit 10 family. Component of the Mediator complex.

It is found in the nucleus. Its function is as follows. Component of the Mediator complex, a coactivator involved in the regulated transcription of nearly all RNA polymerase II-dependent genes. Mediator functions as a bridge to convey information from gene-specific regulatory proteins to the basal RNA polymerase II transcription machinery. Mediator is recruited to promoters by direct interactions with regulatory proteins and serves as a scaffold for the assembly of a functional preinitiation complex with RNA polymerase II and the general transcription factors. Required for germ cell development and for transcriptional activation of certain stage-specific inducible promoters. This chain is Mediator of RNA polymerase II transcription subunit 10 (mdt-10), found in Caenorhabditis elegans.